A 315-amino-acid polypeptide reads, in one-letter code: Rhomboid-related protein 4 (315 aa).

The Cytoplasmic segment spans residues 1-21 (MQRRTRGINTGLLLLLSQVFQ). The helical transmembrane segment at 22-42 (IGINNIPPVTLATLAVNVWFF) threads the bilayer. Over 43 to 103 (LNPWKPLYHS…KLERRLGSRW (61 aa)) the chain is Lumenal. Residues 104–124 (FAYVIATFSLLTGVVYLLLQF) form a helical membrane-spanning segment. Residues 125–137 (TVAELLNQPDFKR) lie on the Cytoplasmic side of the membrane. A helical membrane pass occupies residues 138 to 154 (NCAVGFSGVLFALKVLS). Residue Ser-144 is the Nucleophile of the active site. The Lumenal segment spans residues 155–180 (NHYCPGGFVNILGFPVPNRFACWAEL). Residues 181–201 (VAIHFCTPGTSFAGHLAGILV) traverse the membrane as a helical segment. His-195 is an active-site residue. Over 202-315 (GLMYTQGPLK…RQRLHRFDGQ (114 aa)) the chain is Cytoplasmic. Positions 269 to 284 (SEEEQLERALRASIWD) are ubiquitin-binding domain (UBD). The VCP/p97-interacting motif (VIM) stretch occupies residues 301–315 (PEEMRRQRLHRFDGQ).

This sequence belongs to the peptidase S54 family. Interacts with BIK and STEAP3. Interacts (via C-terminal domain) with VCP/P97. Interacts with ubiquitin and ubiquitinated proteins. Expressed in testis (at protein level). Expressed in intestine, lung, brain, kidney, epididymis, stomach, muscle, spleen, liver, heart and testis.

It localises to the endoplasmic reticulum membrane. It is found in the mitochondrion membrane. The enzyme catalyses Cleaves type-1 transmembrane domains using a catalytic dyad composed of serine and histidine that are contributed by different transmembrane domains.. Inhibited by aprotinin. Its function is as follows. Intramembrane-cleaving serine protease that cleaves single transmembrane or multi-pass membrane proteins in the hydrophobic plane of the membrane, luminal loops and juxtamembrane regions. Involved in regulated intramembrane proteolysis and the subsequent release of functional polypeptides from their membrane anchors. Functional component of endoplasmic reticulum-associated degradation (ERAD) for misfolded membrane proteins. Required for the degradation process of some specific misfolded endoplasmic reticulum (ER) luminal proteins. Participates in the transfer of misfolded proteins from the ER to the cytosol, where they are destroyed by the proteasome in a ubiquitin-dependent manner. Functions in BIK, MPZ, PKD1, PTCRA, RHO, STEAP3 and TRAC processing. Involved in the regulation of exosomal secretion; inhibits the TSAP6-mediated secretion pathway. Involved in the regulation of apoptosis; modulates BIK-mediated apoptotic activity. Also plays a role in the regulation of spermatogenesis; inhibits apoptotic activity in spermatogonia. The sequence is that of Rhomboid-related protein 4 (Rhbdd1) from Mus musculus (Mouse).